Consider the following 407-residue polypeptide: Cytochrome P450-pinF2, plant-inducible (407 aa).

Heme is bound at residue C356.

Belongs to the cytochrome P450 family. It depends on heme as a cofactor.

Not essential for virulence, but may be involved in the detoxification of plant protective agents at the site of wounding. In Rhizobium radiobacter (Agrobacterium tumefaciens), this protein is Cytochrome P450-pinF2, plant-inducible (cyp104).